The chain runs to 470 residues: Zinc finger and BTB domain-containing protein 8A.1-A (470 aa).

Positions 24-92 (CDCHIIVEGQ…VYSGKLPLSG (69 aa)) constitute a BTB domain. The disordered stretch occupies residues 260–280 (EDEDAASHSWPESPQQESLDQ). Over residues 269-278 (WPESPQQESL) the composition is skewed to polar residues. 2 C2H2-type zinc fingers span residues 316–338 (FKCP…LRCH) and 344–367 (YPCE…QTIH). Positions 439 to 450 (GRKENGSERAES) are enriched in basic and acidic residues. The segment at 439-470 (GRKENGSERAESDLAIQEVVDSEDDELKEKQD) is disordered.

The protein localises to the nucleus. Functionally, may be involved in transcriptional regulation. The sequence is that of Zinc finger and BTB domain-containing protein 8A.1-A (zbtb8a.1-a) from Xenopus laevis (African clawed frog).